Reading from the N-terminus, the 214-residue chain is Thymidylate kinase (214 aa).

Position 9–16 (9–16 (GIEGCGKT)) interacts with ATP.

It belongs to the thymidylate kinase family.

The enzyme catalyses dTMP + ATP = dTDP + ADP. Phosphorylation of dTMP to form dTDP in both de novo and salvage pathways of dTTP synthesis. This Geotalea daltonii (strain DSM 22248 / JCM 15807 / FRC-32) (Geobacter daltonii) protein is Thymidylate kinase.